Consider the following 383-residue polypeptide: Neuropeptide Y receptor type 1 (383 aa).

The Extracellular segment spans residues 1–44 (MNSTSFSQVENHSIYYNFSEKNSRFLAFENDDCHLPLAMIFTLA). N-linked (GlcNAc...) asparagine glycosylation is found at N2, N11, and N17. The chain crosses the membrane as a helical span at residues 45-65 (LAYGAVIILGVSGNLALIIII). At 66–76 (LKQKEMRNVTN) the chain is on the cytoplasmic side. A helical transmembrane segment spans residues 77–97 (ILIVNLSFSDLLVAIMCLPFT). The Extracellular segment spans residues 98-116 (FVYTLMDHWVFGEAMCKLN). Residues C113 and C198 are joined by a disulfide bond. Residues 117–137 (PFVQCVSITVSIFSLVLIAVE) form a helical membrane-spanning segment. Over 138-154 (RHQLIINPRGWRPNNRH) the chain is Cytoplasmic. The helical transmembrane segment at 155–175 (AYVGIAVIWVLAVASSLPFLI) threads the bilayer. Over 176 to 211 (YQVLTDEPFQNVTLDAFKDKYVCFDKFPSDSHRLSY) the chain is Extracellular. N-linked (GlcNAc...) asparagine glycosylation occurs at N186. Residues 212–232 (TTLLLVLQYFGPLCFIFICYF) form a helical membrane-spanning segment. The Cytoplasmic portion of the chain corresponds to 233–260 (KIYVRLKRRNSMMDKMRDNKYRSSEAKR). Residues 261–281 (INIMLLSIVVAFAVCWLPLTI) form a helical membrane-spanning segment. Residues 282 to 299 (FNTVFDWDHQIIATCNHN) lie on the Extracellular side of the membrane. A helical membrane pass occupies residues 300 to 320 (LLFLLCHLTAMISTCVNPIFY). The Cytoplasmic segment spans residues 321-383 (GFLNKNFQRD…KIHTDDNEKI (63 aa)). C338 is lipidated: S-palmitoyl cysteine. At S368 the chain carries Phosphoserine.

The protein belongs to the G-protein coupled receptor 1 family.

It is found in the cell membrane. In terms of biological role, receptor for neuropeptide Y and peptide YY. The sequence is that of Neuropeptide Y receptor type 1 (NPY1R) from Bos taurus (Bovine).